A 240-amino-acid chain; its full sequence is Poxin (240 aa).

Residue His-46 is the Proton donor of the active site. Tyr-181 acts as the Shared with catalytic histidine of dimeric partner in catalysis. The active-site Proton acceptor; shared with catalytic histidine of dimeric partner is the Lys-185.

This sequence belongs to the poxin family. Homodimer.

It carries out the reaction 2',3'-cGAMP + H2O = Gp(2'-5')Ap(3') + H(+). In terms of biological role, nuclease that cleaves host 2',3'-cGAMP. In Bombyx mori (Silk moth), this protein is Poxin (p26).